Consider the following 215-residue polypeptide: uncharacterized protein (215 aa).

Residues serine 114, aspartate 162, and histidine 194 each act as charge relay system in the active site.

This sequence belongs to the AB hydrolase superfamily. AB hydrolase 2 family.

This is an uncharacterized protein from Rickettsia prowazekii (strain Madrid E).